We begin with the raw amino-acid sequence, 374 residues long: Queuine tRNA-ribosyltransferase (374 aa).

Residue Asp89 is the Proton acceptor of the active site. Substrate is bound by residues 89-93, Asp143, Gln187, and Gly214; that span reads DSGGF. The segment at 245–251 is RNA binding; sequence GVGKPED. The active-site Nucleophile is the Asp264. The tract at residues 269-273 is RNA binding; important for wobble base 34 recognition; it reads TRNAR. Residues Cys302, Cys304, Cys307, and His333 each coordinate Zn(2+).

It belongs to the queuine tRNA-ribosyltransferase family. In terms of assembly, homodimer. Within each dimer, one monomer is responsible for RNA recognition and catalysis, while the other monomer binds to the replacement base PreQ1. Zn(2+) serves as cofactor.

The enzyme catalyses 7-aminomethyl-7-carbaguanine + guanosine(34) in tRNA = 7-aminomethyl-7-carbaguanosine(34) in tRNA + guanine. It functions in the pathway tRNA modification; tRNA-queuosine biosynthesis. Its function is as follows. Catalyzes the base-exchange of a guanine (G) residue with the queuine precursor 7-aminomethyl-7-deazaguanine (PreQ1) at position 34 (anticodon wobble position) in tRNAs with GU(N) anticodons (tRNA-Asp, -Asn, -His and -Tyr). Catalysis occurs through a double-displacement mechanism. The nucleophile active site attacks the C1' of nucleotide 34 to detach the guanine base from the RNA, forming a covalent enzyme-RNA intermediate. The proton acceptor active site deprotonates the incoming PreQ1, allowing a nucleophilic attack on the C1' of the ribose to form the product. After dissociation, two additional enzymatic reactions on the tRNA convert PreQ1 to queuine (Q), resulting in the hypermodified nucleoside queuosine (7-(((4,5-cis-dihydroxy-2-cyclopenten-1-yl)amino)methyl)-7-deazaguanosine). This chain is Queuine tRNA-ribosyltransferase, found in Shewanella sp. (strain MR-4).